The primary structure comprises 192 residues: Der GTPase-activating protein YihI (192 aa).

A disordered region spans residues methionine 1–proline 80. Basic and acidic residues-rich tracts occupy residues arginine 9 to glutamine 25, threonine 37 to glutamate 48, and aspartate 65 to proline 80.

It belongs to the YihI family. In terms of assembly, interacts with Der.

Functionally, a GTPase-activating protein (GAP) that modifies Der/EngA GTPase function. May play a role in ribosome biogenesis. The sequence is that of Der GTPase-activating protein YihI from Actinobacillus pleuropneumoniae serotype 5b (strain L20).